The following is a 284-amino-acid chain: Probable endonuclease 4 (284 aa).

9 residues coordinate Zn(2+): His-69, His-113, Glu-148, Asp-182, His-185, His-217, Asp-230, His-232, and Glu-262.

This sequence belongs to the AP endonuclease 2 family. Zn(2+) is required as a cofactor.

It catalyses the reaction Endonucleolytic cleavage to 5'-phosphooligonucleotide end-products.. Endonuclease IV plays a role in DNA repair. It cleaves phosphodiester bonds at apurinic or apyrimidinic (AP) sites, generating a 3'-hydroxyl group and a 5'-terminal sugar phosphate. The protein is Probable endonuclease 4 of Bifidobacterium longum subsp. infantis (strain ATCC 15697 / DSM 20088 / JCM 1222 / NCTC 11817 / S12).